The sequence spans 257 residues: MALAKRIIPCLDVTAGRVVKGVNFVELRDAGDPVEIARRYDEQGADELTFLDITATSDQRDLILPIIEAVASQVFIPLTVGGGVRAVEDVRRLLNAGADKVSMNSSAVANPQLVRDSTDKYGSQCIVVAIDAKRVSAEGETPRWEVFTHGGRKNTGLDAVEWARRMAELGAGEILLTSMDRDGTKSGFDIALTRAVSDAVSIPVIASGGVGSLQHLADGITQGRADAVLAASIFHYGEHTVGECKRFMADQGISVRL.

Catalysis depends on residues aspartate 12 and aspartate 131.

Belongs to the HisA/HisF family. Heterodimer of HisH and HisF.

Its subcellular location is the cytoplasm. It carries out the reaction 5-[(5-phospho-1-deoxy-D-ribulos-1-ylimino)methylamino]-1-(5-phospho-beta-D-ribosyl)imidazole-4-carboxamide + L-glutamine = D-erythro-1-(imidazol-4-yl)glycerol 3-phosphate + 5-amino-1-(5-phospho-beta-D-ribosyl)imidazole-4-carboxamide + L-glutamate + H(+). It functions in the pathway amino-acid biosynthesis; L-histidine biosynthesis; L-histidine from 5-phospho-alpha-D-ribose 1-diphosphate: step 5/9. Its function is as follows. IGPS catalyzes the conversion of PRFAR and glutamine to IGP, AICAR and glutamate. The HisF subunit catalyzes the cyclization activity that produces IGP and AICAR from PRFAR using the ammonia provided by the HisH subunit. In Paraburkholderia phymatum (strain DSM 17167 / CIP 108236 / LMG 21445 / STM815) (Burkholderia phymatum), this protein is Imidazole glycerol phosphate synthase subunit HisF.